A 368-amino-acid chain; its full sequence is D-alanine--D-alanine ligase (368 aa).

The 204-residue stretch at 145–348 folds into the ATP-grasp domain; the sequence is KRLLQGAGLH…YQDLITTLIE (204 aa). Position 175-230 (175-230) interacts with ATP; it reads ADQLGLPLFIKPANQGSSVGVNKATTEAEFTAAIEEAFSYDHKVLIEAAIKGREIE. Positions 302, 315, and 317 each coordinate Mg(2+).

It belongs to the D-alanine--D-alanine ligase family. The cofactor is Mg(2+). Mn(2+) serves as cofactor.

The protein localises to the cytoplasm. It carries out the reaction 2 D-alanine + ATP = D-alanyl-D-alanine + ADP + phosphate + H(+). It participates in cell wall biogenesis; peptidoglycan biosynthesis. Cell wall formation. The chain is D-alanine--D-alanine ligase from Shouchella clausii (strain KSM-K16) (Alkalihalobacillus clausii).